Reading from the N-terminus, the 128-residue chain is Fluoride-specific ion channel FluC (128 aa).

The next 4 membrane-spanning stretches (helical) occupy residues 7–27 (AVLL…LIAV), 34–54 (TGFP…IGMI), 70–90 (LLLA…MYEI), and 104–124 (LYLI…MALA). 2 residues coordinate Na(+): glycine 78 and threonine 81.

The protein belongs to the fluoride channel Fluc/FEX (TC 1.A.43) family.

It is found in the cell inner membrane. The enzyme catalyses fluoride(in) = fluoride(out). Na(+) is not transported, but it plays an essential structural role and its presence is essential for fluoride channel function. In terms of biological role, fluoride-specific ion channel. Important for reducing fluoride concentration in the cell, thus reducing its toxicity. In Prosthecochloris aestuarii (strain DSM 271 / SK 413), this protein is Fluoride-specific ion channel FluC.